The chain runs to 249 residues: Type III pantothenate kinase (249 aa).

6–13 provides a ligand contact to ATP; sequence DAGNSRIK. Substrate contacts are provided by residues phenylalanine 77 and 98-101; that span reads GVDR. The Proton acceptor role is filled by aspartate 100. Aspartate 121 is a K(+) binding site. Serine 124 contacts ATP. Threonine 177 contacts substrate.

This sequence belongs to the type III pantothenate kinase family. Homodimer. Requires NH4(+) as cofactor. K(+) is required as a cofactor.

The protein resides in the cytoplasm. The catalysed reaction is (R)-pantothenate + ATP = (R)-4'-phosphopantothenate + ADP + H(+). Its pathway is cofactor biosynthesis; coenzyme A biosynthesis; CoA from (R)-pantothenate: step 1/5. Functionally, catalyzes the phosphorylation of pantothenate (Pan), the first step in CoA biosynthesis. The chain is Type III pantothenate kinase from Teredinibacter turnerae (strain ATCC 39867 / T7901).